The following is a 414-amino-acid chain: MTSSLVLILAPLALVAIGEAAFGNSSKIFEIPGLEVMASDKYPHFTTIETVSRTKVHRHRREVIAGQIYDWNSYEIPFQIWGGDYNFQSLIRRGIRMWEDSTCLRFKENQQSRDAIRYVLEKGDSCFTEYIGRNGGHQDIIIGSECAEEYVVAHETGHALGFWHTHQRPDRDRHISINWKNVMEEATASFMPFRSMLQAFGIRQVSPRRVPYDYGSLMHYHAVAHAVKVSDFTIVPKELKYVTTMGTEKMAFLDAKVINDIYCPNACQGRNHLNCLAGGYPDPNNCNVCRCPEGLGGPDCGRLQPSPCGGEIHASDQWQTLSSPSGRDVHCYWRISVPEGSRVRFRLSDGEFPCSYGCQSYVEIKHKLDVRLTGFRSCCYRPKEDTVSESNQIFVIYHPNGRTARFSLRFRRQA.

The signal sequence occupies residues 1–20; it reads MTSSLVLILAPLALVAIGEA. A propeptide spanning residues 21–61 is cleaved from the precursor; sequence AFGNSSKIFEIPGLEVMASDKYPHFTTIETVSRTKVHRHRR. An N-linked (GlcNAc...) asparagine glycan is attached at N24. The Peptidase M12A domain occupies 62–264; that stretch reads EVIAGQIYDW…AKVINDIYCP (203 aa). 6 cysteine pairs are disulfide-bonded: C103–C263, C126–C146, C267–C286, C289–C300, C308–C331, and C358–C378. H154 serves as a coordination point for Zn(2+). E155 is an active-site residue. Positions 158 and 164 each coordinate Zn(2+). The EGF-like domain maps to 251–307; sequence AFLDAKVINDIYCPNACQGRNHLNCLAGGYPDPNNCNVCRCPEGLGGPDCGRLQPSP. The region spanning 308-414 is the CUB domain; it reads CGGEIHASDQ…RFSLRFRRQA (107 aa).

The cofactor is Zn(2+).

It localises to the secreted. In terms of biological role, metalloprotease. The sequence is that of Zinc metalloproteinase nas-26 (toh-1) from Caenorhabditis elegans.